Here is a 1330-residue protein sequence, read N- to C-terminus: Fanconi anemia group I protein homolog (1330 aa).

A Glycyl lysine isopeptide (Lys-Gly) (interchain with G-Cter in ubiquitin) cross-link involves residue Lys522. Phosphoserine is present on Ser555. The residue at position 558 (Thr558) is a Phosphothreonine. Ser729 is modified (phosphoserine). Thr948 is subject to Phosphothreonine. Ser1122 is subject to Phosphoserine. Residues 1299-1330 (EDEEDENEEGTASAHTQQDREPAKKRRKKCLS) are disordered. Positions 1321–1330 (AKKRRKKCLS) are enriched in basic residues.

Belongs to the Fanconi anemia group I protein family. Homodimer. Part of a FANCI-FANCD2 heterodimeric complex that binds and scans dsDNA for DNA damage. Interacts with FANCL. Interacts with MTMR15/FAN1. Interacts with POLN. Interacts with UBL5; the interaction promotes FANCI homodimerization. In terms of processing, monoubiquitinated by FANCL on Lys-522 during S phase and upon genotoxic stress. Deubiquitinated by USP1 as cells enter G2/M, or once DNA repair is completed. Monoubiquitination requires the FANCA-FANCB-FANCC-FANCE-FANCF-FANCG-FANCM complex. Ubiquitination is required for binding to chromatin, DNA repair, and normal cell cycle progression. Monoubiquitination is stimulated by DNA-binding. Phosphorylated in response to DNA damage by ATM and/or ATR. Phosphorylation of FANCI promotes ubiquitination of FANCD2, which prevents DNA release from the FANCI-FANCD2 complex.

It localises to the nucleus. It is found in the cytoplasm. Functionally, plays an essential role in the repair of DNA double-strand breaks by homologous recombination and in the repair of interstrand DNA cross-links (ICLs) by promoting FANCD2 monoubiquitination by FANCL and participating in recruitment to DNA repair sites. The FANCI-FANCD2 complex binds and scans double-stranded DNA (dsDNA) for DNA damage; this complex stalls at DNA junctions between double-stranded DNA and single-stranded DNA. Participates in S phase and G2 phase checkpoint activation upon DNA damage. The polypeptide is Fanconi anemia group I protein homolog (Fanci) (Mus musculus (Mouse)).